A 126-amino-acid chain; its full sequence is S-adenosylmethionine decarboxylase proenzyme (126 aa).

Residue serine 63 is the Schiff-base intermediate with substrate; via pyruvic acid of the active site. Serine 63 bears the Pyruvic acid (Ser); by autocatalysis mark. Histidine 68 serves as the catalytic Proton acceptor; for processing activity. Cysteine 83 serves as the catalytic Proton donor; for catalytic activity.

It belongs to the prokaryotic AdoMetDC family. Type 1 subfamily. Heterotetramer of two alpha and two beta chains arranged as a dimer of alpha/beta heterodimers. The cofactor is pyruvate. Is synthesized initially as an inactive proenzyme. Formation of the active enzyme involves a self-maturation process in which the active site pyruvoyl group is generated from an internal serine residue via an autocatalytic post-translational modification. Two non-identical subunits are generated from the proenzyme in this reaction, and the pyruvate is formed at the N-terminus of the alpha chain, which is derived from the carboxyl end of the proenzyme. The post-translation cleavage follows an unusual pathway, termed non-hydrolytic serinolysis, in which the side chain hydroxyl group of the serine supplies its oxygen atom to form the C-terminus of the beta chain, while the remainder of the serine residue undergoes an oxidative deamination to produce ammonia and the pyruvoyl group blocking the N-terminus of the alpha chain.

The catalysed reaction is S-adenosyl-L-methionine + H(+) = S-adenosyl 3-(methylsulfanyl)propylamine + CO2. It participates in amine and polyamine biosynthesis; S-adenosylmethioninamine biosynthesis; S-adenosylmethioninamine from S-adenosyl-L-methionine: step 1/1. Its function is as follows. Catalyzes the decarboxylation of S-adenosylmethionine to S-adenosylmethioninamine (dcAdoMet), the propylamine donor required for the synthesis of the polyamines spermine and spermidine from the diamine putrescine. The sequence is that of S-adenosylmethionine decarboxylase proenzyme from Clostridium kluyveri (strain NBRC 12016).